Here is a 408-residue protein sequence, read N- to C-terminus: NADH-quinone oxidoreductase subunit D (408 aa).

This sequence belongs to the complex I 49 kDa subunit family. In terms of assembly, NDH-1 is composed of 14 different subunits. Subunits NuoB, C, D, E, F, and G constitute the peripheral sector of the complex.

It is found in the cell inner membrane. It catalyses the reaction a quinone + NADH + 5 H(+)(in) = a quinol + NAD(+) + 4 H(+)(out). NDH-1 shuttles electrons from NADH, via FMN and iron-sulfur (Fe-S) centers, to quinones in the respiratory chain. The immediate electron acceptor for the enzyme in this species is believed to be ubiquinone. Couples the redox reaction to proton translocation (for every two electrons transferred, four hydrogen ions are translocated across the cytoplasmic membrane), and thus conserves the redox energy in a proton gradient. This Wolinella succinogenes (strain ATCC 29543 / DSM 1740 / CCUG 13145 / JCM 31913 / LMG 7466 / NCTC 11488 / FDC 602W) (Vibrio succinogenes) protein is NADH-quinone oxidoreductase subunit D.